A 159-amino-acid polypeptide reads, in one-letter code: Probable acetolactate synthase small subunit (159 aa).

The ACT domain maps to 4–78 (TIAVLVENKP…ETIKVSEITE (75 aa)).

Belongs to the acetolactate synthase small subunit family. In terms of assembly, dimer of large and small chains.

It catalyses the reaction 2 pyruvate + H(+) = (2S)-2-acetolactate + CO2. It functions in the pathway amino-acid biosynthesis; L-isoleucine biosynthesis; L-isoleucine from 2-oxobutanoate: step 1/4. Its pathway is amino-acid biosynthesis; L-valine biosynthesis; L-valine from pyruvate: step 1/4. This chain is Probable acetolactate synthase small subunit (ilvH), found in Archaeoglobus fulgidus (strain ATCC 49558 / DSM 4304 / JCM 9628 / NBRC 100126 / VC-16).